The sequence spans 135 residues: Ribonuclease P protein component (135 aa).

The protein belongs to the RnpA family. Consists of a catalytic RNA component (M1 or rnpB) and a protein subunit.

It carries out the reaction Endonucleolytic cleavage of RNA, removing 5'-extranucleotides from tRNA precursor.. In terms of biological role, RNaseP catalyzes the removal of the 5'-leader sequence from pre-tRNA to produce the mature 5'-terminus. It can also cleave other RNA substrates such as 4.5S RNA. The protein component plays an auxiliary but essential role in vivo by binding to the 5'-leader sequence and broadening the substrate specificity of the ribozyme. The sequence is that of Ribonuclease P protein component from Pseudomonas aeruginosa (strain ATCC 15692 / DSM 22644 / CIP 104116 / JCM 14847 / LMG 12228 / 1C / PRS 101 / PAO1).